Reading from the N-terminus, the 80-residue chain is MDNDEIFSKVRSIISEQLDKKEDEITIDSRFVEDLNADSLDIYELLYLLEEAFDDKIPENEANEFETVGDVVNFIKKRKG.

The Carrier domain maps to Asp4 to Lys79. Position 39 is an O-(pantetheine 4'-phosphoryl)serine (Ser39).

It belongs to the acyl carrier protein (ACP) family. Post-translationally, 4'-phosphopantetheine is transferred from CoA to a specific serine of apo-ACP by AcpS. This modification is essential for activity because fatty acids are bound in thioester linkage to the sulfhydryl of the prosthetic group.

It is found in the cytoplasm. The protein operates within lipid metabolism; fatty acid biosynthesis. Carrier of the growing fatty acid chain in fatty acid biosynthesis. In Borrelia garinii subsp. bavariensis (strain ATCC BAA-2496 / DSM 23469 / PBi) (Borreliella bavariensis), this protein is Acyl carrier protein.